The primary structure comprises 128 residues: T-cell leukemia/lymphoma protein 1B (128 aa).

The protein belongs to the TCL1 family. Interacts with AKT1 and AKT2 (via PH domain). Does not interact with AKT3. In terms of tissue distribution, expressed in a variety of tissues including placenta and testis.

Functionally, enhances the phosphorylation and activation of AKT1 and AKT2. The protein is T-cell leukemia/lymphoma protein 1B (TCL1B) of Homo sapiens (Human).